A 396-amino-acid chain; its full sequence is 8-amino-7-oxononanoate synthase (396 aa).

Arg-21 is a substrate binding site. Gly-108–Tyr-109 contributes to the pyridoxal 5'-phosphate binding site. His-133 is a binding site for substrate. Ser-179, His-207, and Thr-236 together coordinate pyridoxal 5'-phosphate. Residue Lys-239 is modified to N6-(pyridoxal phosphate)lysine. Thr-353 is a binding site for substrate.

The protein belongs to the class-II pyridoxal-phosphate-dependent aminotransferase family. BioF subfamily. In terms of assembly, homodimer. It depends on pyridoxal 5'-phosphate as a cofactor.

The enzyme catalyses 6-carboxyhexanoyl-[ACP] + L-alanine + H(+) = (8S)-8-amino-7-oxononanoate + holo-[ACP] + CO2. It participates in cofactor biosynthesis; biotin biosynthesis. In terms of biological role, catalyzes the decarboxylative condensation of pimeloyl-[acyl-carrier protein] and L-alanine to produce 8-amino-7-oxononanoate (AON), [acyl-carrier protein], and carbon dioxide. In Hahella chejuensis (strain KCTC 2396), this protein is 8-amino-7-oxononanoate synthase.